The primary structure comprises 1719 residues: Sodium channel protein type 4 subunit alpha B (1719 aa).

Over 1-126 (MRTLLPPVGS…IVAIKILIHS (126 aa)) the chain is Cytoplasmic. The tract at residues 28–50 (QQIREEERKRTNAQVSEELPEPA) is disordered. The stretch at 108–431 (LLSPFNALRI…VVAMAYAEQN (324 aa)) is one I repeat. The helical transmembrane segment at 127–145 (LFSLFIMATILTNCAFMTL) threads the bilayer. At 146 to 152 (SDPPAWS) the chain is on the extracellular side. Residues 153–173 (KTMEYVFTFIYTFEATIKILS) traverse the membrane as a helical segment. Residues 174–187 (RGFCVGKFTFLKDP) lie on the Cytoplasmic side of the membrane. Residues 188-205 (WNWLDFMVISMAYLTELV) traverse the membrane as a helical segment. At 206-211 (DLGNVS) the chain is on the extracellular side. Asparagine 209 is a glycosylation site (N-linked (GlcNAc...) asparagine). The helical transmembrane segment at 212–228 (VLRTFRVLRALKTITVI) threads the bilayer. At 229–247 (PGLKTIVGALIQSVRKLAD) the chain is on the cytoplasmic side. A helical membrane pass occupies residues 248–267 (AMVLTVFCLSVFALIGLQLF). The Extracellular segment spans residues 268–368 (MGNLRQKCVL…PNYGYTSYDS (101 aa)). An intrachain disulfide couples cysteine 275 to cysteine 337. Asparagine 285 and asparagine 339 each carry an N-linked (GlcNAc...) asparagine glycan. Cysteines 346 and 352 form a disulfide. The pore-forming intramembrane region spans 369–393 (FGWAFLALFRLMTQDFWENLFQLTL). Topologically, residues 394–400 (RTAGKTY) are extracellular. The helical transmembrane segment at 401–421 (MIFFVVVIFLGSFYLINLILA) threads the bilayer. Over 422-513 (VVAMAYAEQN…ECLYAIVMDP (92 aa)) the chain is Cytoplasmic. Residues 495–766 (CCGCWRHLKE…QIAINRINRA (272 aa)) form an II repeat. A helical transmembrane segment spans residues 514–532 (FVDLGITICIILNTVFMAM). Over 533-543 (EHYPMSADFEE) the chain is Extracellular. A helical membrane pass occupies residues 544-563 (LLSVGNLVFTGIFTGEMVFK). Over 564–577 (ILAMDPYFYFQVGW) the chain is Cytoplasmic. The helical transmembrane segment at 578–597 (NIFDSIIVTISLVELGLANV) threads the bilayer. Residues 598-599 (QG) are Extracellular-facing. A helical transmembrane segment spans residues 600–617 (LSVLRSFRLMRVFKLAKS). The Cytoplasmic segment spans residues 618–633 (WPTLNMLIKIIGNSVG). A helical transmembrane segment spans residues 634–652 (ALGNLTLVLAIIVFIFAVV). The Extracellular segment spans residues 653 to 681 (GMQLFGKNYKDCVCRISEDCVLPRWHMND). Residues cysteine 666 and cysteine 672 are joined by a disulfide bond. The segment at residues 682-702 (FFHAFLIIFRVLCGEWIESMW) is an intramembrane region (pore-forming). At 703 to 713 (DCMEVSGQTMC) the chain is on the extracellular side. Cysteine 704 and cysteine 713 are oxidised to a cystine. The helical transmembrane segment at 714-732 (LIVFMMVLVIGNLVVLNLF) threads the bilayer. At 733 to 919 (LALLLSSFSG…TCFSIVENNY (187 aa)) the chain is on the cytoplasmic side. A compositionally biased stretch (acidic residues) spans 834–845 (SDSDDSDYDEDK). The tract at residues 834 to 862 (SDSDDSDYDEDKDSQCDESSVCSSVQKPE) is disordered. One copy of the III repeat lies at 900–1215 (RGKIWCNIRR…KKYYNAMKKL (316 aa)). The chain crosses the membrane as a helical span at residues 920–937 (FESFIVFMILLSSGALAF). At 938–950 (EDIYLEKHQLIKS) the chain is on the extracellular side. Residues 951-969 (ILEYADKVFTYVFVMEMVL) traverse the membrane as a helical segment. The Cytoplasmic segment spans residues 970–983 (KWFAYGFKSYFSNA). Residues 984–1002 (WCWLDFLIVDVSLVSLTAN) form a helical membrane-spanning segment. Residues 1003 to 1010 (ILGYSELG) are Extracellular-facing. Residues 1011-1029 (AIKSLRTLRALRPLRALSR) form a helical membrane-spanning segment. Over 1030–1046 (FEGMRVVVNALVGAVPS) the chain is Cytoplasmic. The chain crosses the membrane as a helical span at residues 1047–1066 (IFNVLLVCLIFWLIFSIMGV). Over 1067 to 1119 (NLFAGKFSYCFNETSQEIIDTKVVDNKTECIALIKANFTEVRWKNVKVNYDNV) the chain is Extracellular. A disulfide bridge links cysteine 1076 with cysteine 1096. 2 N-linked (GlcNAc...) asparagine glycosylation sites follow: asparagine 1078 and asparagine 1092. An intramembrane region (pore-forming) is located at residues 1120–1141 (GIGYLSLLQVATFKGWTDIMYA). At 1142–1158 (AVDSRDVESQPIYEVNL) the chain is on the extracellular side. A helical transmembrane segment spans residues 1159-1180 (YMYLYFVIFIIFGSFFTLNLFI). Residues 1181-1243 (GVIIDNFNQQ…LVFDLVTKQI (63 aa)) are Cytoplasmic-facing. Residues 1199 to 1201 (IFM) are important for rapid channel inactivation. Residues 1224 to 1521 (VPRPENPFQG…WEKFDPDASQ (298 aa)) form an IV repeat. Residues 1244 to 1261 (FDVFIMVLICLNMVTMMV) form a helical membrane-spanning segment. Over 1262–1272 (ETDEQSDKKEE) the chain is Extracellular. The chain crosses the membrane as a helical span at residues 1273–1291 (VLYWINVVFILIFTTECTL). The Cytoplasmic portion of the chain corresponds to 1292–1303 (KIIALRRHYFSI). A helical membrane pass occupies residues 1304–1321 (GWNIFDFVVVILSILGLL). At 1322-1334 (LADIIEKYFVSPT) the chain is on the extracellular side. The chain crosses the membrane as a helical span at residues 1335-1351 (LFRVIRLARIGRVLRLI). Residues 1352 to 1370 (RGAKGIRTLLFALMMSLPA) lie on the Cytoplasmic side of the membrane. A helical transmembrane segment spans residues 1371–1388 (LFNIGLLLFLIMFIFSIF). The Extracellular segment spans residues 1389–1410 (GMSNFAYVKKEALIDDMFNFET). Positions 1411–1433 (FGNSMICLFMITTSAGWDGLLSP) form an intramembrane region, pore-forming. Topologically, residues 1434 to 1462 (IMNTPPDCDPNVENPGTTVRGNCGSPAIG) are extracellular. Cysteine 1441 and cysteine 1456 are disulfide-bonded. A helical membrane pass occupies residues 1463–1485 (IAFFSTYIIMSFLVVVNMFIAII). Over 1486–1719 (LENFNVATEE…QERDQRETSV (234 aa)) the chain is Cytoplasmic. Residues 1615–1644 (EEVAATVIQRAYRKYLLLRTVRLASFMYRE) enclose the IQ domain.

The protein belongs to the sodium channel (TC 1.A.1.10) family. Nav1.4/SCN4A subfamily. In terms of assembly, voltage-gated sodium (Nav) channels consist of an ion-conducting alpha subunit which is functional on its own associated with regulatory beta subunits.

It localises to the cell membrane. The catalysed reaction is Na(+)(in) = Na(+)(out). Pore-forming subunit of a voltage-gated sodium (Nav) channel that directly mediates the depolarizing phase of action potentials in excitable membranes. Navs, also called VGSCs (voltage-gated sodium channels) or VDSCs (voltage-dependent sodium channels), operate by switching between closed and open conformations depending on the voltage difference across the membrane. In the open conformation they allow Na(+) ions to selectively pass through the pore, along their electrochemical gradient. The influx of Na+ ions provokes membrane depolarization, initiating the propagation of electrical signals throughout cells and tissues. The polypeptide is Sodium channel protein type 4 subunit alpha B (scn4ab) (Takifugu rubripes (Japanese pufferfish)).